The chain runs to 323 residues: CYFIP-related Rac1 interactor A (323 aa).

It belongs to the CYRI family.

It is found in the membrane. Functionally, may negatively regulate RAC1 signaling and RAC1-driven cytoskeletal remodeling. May regulate chemotaxis, cell migration and epithelial polarization by controlling the polarity, plasticity, duration and extent of protrusions. The polypeptide is CYFIP-related Rac1 interactor A (CYRIA) (Gallus gallus (Chicken)).